A 288-amino-acid polypeptide reads, in one-letter code: MMVPRISASPVFKRIFLRWGFVTLPIQKTVSHTLRRDFSAPCRSMVKCLLLRPGISVHSAQDRKFYSTEEKSSQFDENKSKSNNGKKNEPHGIKGLMAKYGYSALIVYILLTCVDLPLCFLGVHSLGEEKIKIYLNRGKQLIGMGEPDESKVIQDVRRKQAHREAVQAENADKVEDASRKTFNERWQEMKDSTLLAELLIAYGIHKSLIIVRVPLTAVLTPSFVKLLQRFGIDLMKKQKKVFQTMASGAKIRYKGNNPSDFIKNEGTALDITKRKPRTKGQKWFDGLM.

A disordered region spans residues Thr68 to Pro90.

Heterooligomeric.

The protein resides in the cytoplasm. Maybe involved in N-terminal acetylation of proteins. N-acetylation plays a role in normal eukaryotic translation and processing, protect against proteolytic degradation and protein turnover. The sequence is that of Putative N-terminal acetyltransferase 2 (NAT2) from Saccharomyces cerevisiae (strain ATCC 204508 / S288c) (Baker's yeast).